Consider the following 173-residue polypeptide: uncharacterized protein (173 aa).

The N-terminal stretch at 1–25 (MPVVTAVGRRRGFAMPWVSTARSGA) is a signal peptide.

This is an uncharacterized protein from Mycobacterium bovis (strain ATCC BAA-935 / AF2122/97).